The following is a 103-amino-acid chain: Pyrimidine/purine nucleoside phosphorylase (103 aa).

This sequence belongs to the nucleoside phosphorylase PpnP family.

It catalyses the reaction a purine D-ribonucleoside + phosphate = a purine nucleobase + alpha-D-ribose 1-phosphate. The catalysed reaction is adenosine + phosphate = alpha-D-ribose 1-phosphate + adenine. It carries out the reaction cytidine + phosphate = cytosine + alpha-D-ribose 1-phosphate. The enzyme catalyses guanosine + phosphate = alpha-D-ribose 1-phosphate + guanine. It catalyses the reaction inosine + phosphate = alpha-D-ribose 1-phosphate + hypoxanthine. The catalysed reaction is thymidine + phosphate = 2-deoxy-alpha-D-ribose 1-phosphate + thymine. It carries out the reaction uridine + phosphate = alpha-D-ribose 1-phosphate + uracil. The enzyme catalyses xanthosine + phosphate = alpha-D-ribose 1-phosphate + xanthine. Catalyzes the phosphorolysis of diverse nucleosides, yielding D-ribose 1-phosphate and the respective free bases. Can use uridine, adenosine, guanosine, cytidine, thymidine, inosine and xanthosine as substrates. Also catalyzes the reverse reactions. The protein is Pyrimidine/purine nucleoside phosphorylase of Shewanella sp. (strain W3-18-1).